The following is a 298-amino-acid chain: Probable deoxyhypusine synthase 2 (298 aa).

Lys259 functions as the Nucleophile in the catalytic mechanism.

This sequence belongs to the deoxyhypusine synthase family. It depends on NAD(+) as a cofactor.

The enzyme catalyses [eIF5A protein]-L-lysine + spermidine = [eIF5A protein]-deoxyhypusine + propane-1,3-diamine. It participates in protein modification; eIF5A hypusination. In terms of biological role, catalyzes the NAD-dependent oxidative cleavage of spermidine and the subsequent transfer of the butylamine moiety of spermidine to the epsilon-amino group of a specific lysine residue of the eIF-5A precursor protein to form the intermediate deoxyhypusine residue. This Archaeoglobus fulgidus (strain ATCC 49558 / DSM 4304 / JCM 9628 / NBRC 100126 / VC-16) protein is Probable deoxyhypusine synthase 2 (dys2).